The primary structure comprises 112 residues: Large ribosomal subunit protein P1 (112 aa).

Over residues 71 to 90 the composition is skewed to low complexity; sequence PAQAAAAAPAGGAPAAAAPA. Positions 71–112 are disordered; sequence PAQAAAAAPAGGAPAAAAPAESKEGRRSQGESDDDMGFGLLD. A compositionally biased stretch (basic and acidic residues) spans 91-100; that stretch reads ESKEGRRSQG.

It belongs to the eukaryotic ribosomal protein P1/P2 family. In terms of assembly, P1 and P2 exist as dimers at the large ribosomal subunit.

Its function is as follows. Plays an important role in the elongation step of protein synthesis. The protein is Large ribosomal subunit protein P1 (rpl-21) of Oscheius tipulae.